Here is a 154-residue protein sequence, read N- to C-terminus: Protein X (154 aa).

The tract at residues 68-117 (PCALRFTSARRMETTVNAHRNLPKVLHKRTLGLSAMSTTDLEAYFKDCVF) is mitochondrial targeting sequence.

It belongs to the orthohepadnavirus protein X family. May form homodimer. May interact with host CEBPA, CFLAR, CREB1, DDB1, E4F1, HBXIP, HSPD1/HSP60, NFKBIA, POLR2E and SMAD4. Interacts with host SMC5-SMC6 complex and induces its degradation. Interacts with host TRPC4AP; leading to prevent ubiquitination of TRPC4AP. Interacts with host PLSCR1; this interaction promotes ubiquitination and degradation of HBx and impairs HBx-mediated cell proliferation. Post-translationally, a fraction may be phosphorylated in insect cells and HepG2 cells, a human hepatoblastoma cell line. Phosphorylated in vitro by host protein kinase C or mitogen-activated protein kinase. N-acetylated in insect cells.

It localises to the host cytoplasm. It is found in the host nucleus. Its subcellular location is the host mitochondrion. Multifunctional protein that plays a role in silencing host antiviral defenses and promoting viral transcription. Does not seem to be essential for HBV infection. May be directly involved in development of cirrhosis and liver cancer (hepatocellular carcinoma). Most of cytosolic activities involve modulation of cytosolic calcium. The effect on apoptosis is controversial depending on the cell types in which the studies have been conducted. May induce apoptosis by localizing in mitochondria and causing loss of mitochondrial membrane potential. May also modulate apoptosis by binding host CFLAR, a key regulator of the death-inducing signaling complex (DISC). Promotes viral transcription by using the host E3 ubiquitin ligase DDB1 to target the SMC5-SMC6 complex to proteasomal degradation. This host complex would otherwise bind to viral episomal DNA, and prevents its transcription. Moderately stimulates transcription of many different viral and cellular transcription elements. Promoters and enhancers stimulated by HBx contain DNA binding sites for NF-kappa-B, AP-1, AP-2, c-EBP, ATF/CREB, or the calcium-activated factor NF-AT. The protein is Protein X of Homo sapiens (Human).